We begin with the raw amino-acid sequence, 443 residues long: Thymidine phosphorylase (443 aa).

Belongs to the thymidine/pyrimidine-nucleoside phosphorylase family. As to quaternary structure, homodimer.

The catalysed reaction is thymidine + phosphate = 2-deoxy-alpha-D-ribose 1-phosphate + thymine. Its pathway is pyrimidine metabolism; dTMP biosynthesis via salvage pathway; dTMP from thymine: step 1/2. Its function is as follows. The enzymes which catalyze the reversible phosphorolysis of pyrimidine nucleosides are involved in the degradation of these compounds and in their utilization as carbon and energy sources, or in the rescue of pyrimidine bases for nucleotide synthesis. This is Thymidine phosphorylase from Shewanella baltica (strain OS195).